Reading from the N-terminus, the 416-residue chain is Gamma-glutamyl phosphate reductase (416 aa).

This sequence belongs to the gamma-glutamyl phosphate reductase family.

Its subcellular location is the cytoplasm. It catalyses the reaction L-glutamate 5-semialdehyde + phosphate + NADP(+) = L-glutamyl 5-phosphate + NADPH + H(+). It participates in amino-acid biosynthesis; L-proline biosynthesis; L-glutamate 5-semialdehyde from L-glutamate: step 2/2. Its function is as follows. Catalyzes the NADPH-dependent reduction of L-glutamate 5-phosphate into L-glutamate 5-semialdehyde and phosphate. The product spontaneously undergoes cyclization to form 1-pyrroline-5-carboxylate. This is Gamma-glutamyl phosphate reductase from Leptospira interrogans serogroup Icterohaemorrhagiae serovar Lai (strain 56601).